A 455-amino-acid chain; its full sequence is MMMNRDILFHQQQQQQMEENMSNLTSASGDQASVSSGNRTETSGSNINQHHQEQCFVPQSSLKRKRNQPGNPDPEAEVMALSPKTLMATNRFICEVCNKGFQRDQNLQLHKRGHNLPWKLKQRSNKDVVRKKVYVCPEPGCVHHHPSRALGDLTGIKKHFFRKHGEKKWKCEKCSKKYAVQSDWKAHAKTCGTKEYKCDCGTLFSRRDSFITHRAFCDALAEESARAMPNPIMIQASNSPHHHHHQTQQNIGFSSSSQNIISNSNLHGPMKQEESQHHYQNIPPWLISSNPNPNGNNGNLFPPVASSVNTGRSSFPHPSPAMSATALLQKAAQMGSTKSTTPEEEERSSRSSYNNLITTTMAAMMTSPPEPGFGFQDYYMMNHQHHGGGEAFNGGFVPGEEKNDVVDDGGGETRDFLGLRSLMSHNEILSFANNLGNCLNTSATEQQQQQHSHQD.

Residues 1–52 (MMMNRDILFHQQQQQQMEENMSNLTSASGDQASVSSGNRTETSGSNINQHHQ) form a disordered region. A compositionally biased stretch (polar residues) spans 17–49 (MEENMSNLTSASGDQASVSSGNRTETSGSNINQ). Position 82 is a phosphoserine (S82). 2 consecutive C2H2-type zinc fingers follow at residues 92 to 114 (FICEVCNKGFQRDQNLQLHKRGH) and 134 to 164 (YVCPEPGCVHHHPSRALGDLTGIKKHFFRKH). The Nuclear localization signal motif lies at 156–163 (IKKHFFRK). The C2H2-type 2; degenerate zinc-finger motif lies at 169–192 (WKCEKCSKKYAVQSDWKAHAKTCG). Residues C171, C174, H187, C191, C198, C200, H213, and C217 each contribute to the Zn(2+) site. The segment at 196 to 219 (YKCDCGTLFSRRDSFITHRAFCDA) adopts a CCHC-type 2; atypical zinc-finger fold. The interval 206–218 (RRDSFITHRAFCD) is SHR-binding. The tract at residues 235 to 351 (QASNSPHHHH…PEEEERSSRS (117 aa)) is disordered. Composition is skewed to low complexity over residues 248-265 (QQNIGFSSSSQNIISNSN) and 288-299 (SSNPNPNGNNGN).

Its subcellular location is the nucleus. Functionally, probable transcription factor. In Arabidopsis thaliana (Mouse-ear cress), this protein is Protein indeterminate-domain 7.